The chain runs to 194 residues: dTTP/UTP pyrophosphatase (194 aa).

Asp-66 acts as the Proton acceptor in catalysis.

The protein belongs to the Maf family. YhdE subfamily. A divalent metal cation is required as a cofactor.

It localises to the cytoplasm. It catalyses the reaction dTTP + H2O = dTMP + diphosphate + H(+). It carries out the reaction UTP + H2O = UMP + diphosphate + H(+). Its function is as follows. Nucleoside triphosphate pyrophosphatase that hydrolyzes dTTP and UTP. May have a dual role in cell division arrest and in preventing the incorporation of modified nucleotides into cellular nucleic acids. This is dTTP/UTP pyrophosphatase from Anaeromyxobacter dehalogenans (strain 2CP-C).